A 45-amino-acid chain; its full sequence is Photosystem I reaction center subunit IX 1 (45 aa).

A helical transmembrane segment spans residues 9 to 29 (WFRSAPVVATIWITLTAGIIV).

Belongs to the PsaJ family.

Its subcellular location is the cellular thylakoid membrane. Functionally, may help in the organization of the PsaE and PsaF subunits. This Prochlorococcus marinus (strain NATL1A) protein is Photosystem I reaction center subunit IX 1.